We begin with the raw amino-acid sequence, 107 residues long: Putative double-stranded DNA mimic protein HS_0995 (107 aa).

Belongs to the putative dsDNA mimic protein family.

Functionally, may act as a double-stranded DNA (dsDNA) mimic. Probably regulates the activity of a dsDNA-binding protein. The polypeptide is Putative double-stranded DNA mimic protein HS_0995 (Histophilus somni (strain 129Pt) (Haemophilus somnus)).